A 239-amino-acid chain; its full sequence is Endonuclease V (239 aa).

Residues D50 and D118 each coordinate Mg(2+).

Belongs to the endonuclease V family. Requires Mg(2+) as cofactor.

Its subcellular location is the cytoplasm. The enzyme catalyses Endonucleolytic cleavage at apurinic or apyrimidinic sites to products with a 5'-phosphate.. Functionally, DNA repair enzyme involved in the repair of deaminated bases. Selectively cleaves double-stranded DNA at the second phosphodiester bond 3' to a deoxyinosine leaving behind the intact lesion on the nicked DNA. This Xylella fastidiosa (strain 9a5c) protein is Endonuclease V.